A 531-amino-acid chain; its full sequence is MDNRIKTVVILGGGTAGWMTAAYLGKALQNTVKIVVLEAPTIPRIGVGEATVPNLQRAFFDYLGIPEEEWMRECNASYKMAVKFINWRTPGEGSPDPRTLDDGHTDTFHHPFGLLPSADQIPLSHYWAAKRLQGETDENFDEACFADTAIMNAKKAPRFLDMRRATNYAWHFDASKVAAFLRNFAVTKQAVEHVEDEMTEVLTDERGFITALRTKSGRILQGDLFVDCSGFRGLLINKAMEEPFIDMSDHLLCNSAVATAVPHDDEKNGVEPYTSSIAMEAGWTWKIPMLGRFGSGHVYSDHFATQDEATLAFSKLWGLDPDNTEFNHVRFRVGRNRRAWVRNCVSVGLASCFVEPLESSGIYFIYAAIHMLAKHFPDKTFDKVLVDRFNREIEEMFDDTRDFLQAHYYFSPRVDTPFWRANKELKLADSIKDKVETYRAGLPVNLPVTDEGTYYGNFEAEFRNFWTNGSYYCIFAGLGLMPRNPLPALAYKPQSIAEAELLFADVKRKGDTLVESLPSTYDLLRQLHGAS.

The FAD site is built by Gly13, Thr15, Ala16, Ala39, Ile42, Ile45, Val47, and Ala50. Lys79 is an active-site residue. Residue Pro111 participates in L-tryptophan binding. The FAD site is built by Met198 and Leu349. The chloride site is built by Ser360 and Gly361. An FAD-binding site is contributed by Ile362. L-tryptophan is bound by residues Tyr454, Tyr455, Glu461, and Phe465.

This sequence belongs to the flavin-dependent halogenase family. Bacterial tryptophan halogenase subfamily. Homodimer. Monomer in solution.

It carries out the reaction L-tryptophan + FADH2 + chloride + O2 = 6-chloro-L-tryptophan + FAD + 2 H2O. The catalysed reaction is D-tryptophan + FADH2 + chloride + O2 = 6-chloro-D-tryptophan + FAD + 2 H2O. Functionally, involved in the biosynthesis of thienodolin, a plant growth-regulating compound. Catalyzes the chlorination of tryptophan (Trp) at C6 position to yield 6-chloro-tryptophan. It is also able to use bromide ions to generate monobrominated Trp. In vitro, accepts a wide range of amides and peptides carrying either L- or D-Trp at the N-terminus. This is Tryptophan 6-halogenase ThaL from Streptomyces albogriseolus.